Here is a 164-residue protein sequence, read N- to C-terminus: Kunitz-type serine protease inhibitor BbKI (164 aa).

It belongs to the protease inhibitor I3 (leguminous Kunitz-type inhibitor) family. As to quaternary structure, monomer.

The protein resides in the secreted. In terms of biological role, inhibits bovine trypsin, human plasma kallikrein and plasmin and weakly bovine chymotrypsin. The chain is Kunitz-type serine protease inhibitor BbKI from Bauhinia bauhinioides (Perlebia bauhinoides).